The primary structure comprises 215 residues: Mediator of RNA polymerase II transcription subunit 18 (215 aa).

It belongs to the Mediator complex subunit 18 family. In terms of assembly, component of the Mediator complex.

The protein resides in the nucleus. Its function is as follows. Component of the Mediator complex, a coactivator involved in the regulated transcription of nearly all RNA polymerase II-dependent genes. Mediator functions as a bridge to convey information from gene-specific regulatory proteins to the basal RNA polymerase II transcription machinery. Mediator is recruited to promoters by direct interactions with regulatory proteins and serves as a scaffold for the assembly of a functional preinitiation complex with RNA polymerase II and the general transcription factors. The sequence is that of Mediator of RNA polymerase II transcription subunit 18 (MED18) from Aedes aegypti (Yellowfever mosquito).